The chain runs to 276 residues: Diaminopimelate epimerase (276 aa).

3 residues coordinate substrate: Asn13, Gln46, and Asn66. Cys75 functions as the Proton donor in the catalytic mechanism. Residues 76-77 (GN), Asn159, Asn192, and 210-211 (ER) each bind substrate. Cys219 serves as the catalytic Proton acceptor. 220–221 (GT) contributes to the substrate binding site.

The protein belongs to the diaminopimelate epimerase family. In terms of assembly, homodimer.

It is found in the cytoplasm. The catalysed reaction is (2S,6S)-2,6-diaminopimelate = meso-2,6-diaminopimelate. The protein operates within amino-acid biosynthesis; L-lysine biosynthesis via DAP pathway; DL-2,6-diaminopimelate from LL-2,6-diaminopimelate: step 1/1. Catalyzes the stereoinversion of LL-2,6-diaminopimelate (L,L-DAP) to meso-diaminopimelate (meso-DAP), a precursor of L-lysine and an essential component of the bacterial peptidoglycan. This Aeromonas salmonicida (strain A449) protein is Diaminopimelate epimerase.